Here is a 230-residue protein sequence, read N- to C-terminus: Ribonuclease 3 (230 aa).

An RNase III domain is found at 10–133 (DPRLLSRIGY…IIGAIYLDSS (124 aa)). Glu-46 is a binding site for Mg(2+). The active site involves Asp-50. Positions 119 and 122 each coordinate Mg(2+). Glu-122 is an active-site residue. Residues 161 to 230 (DPKSRLQEYL…AAEILKLLEQ (70 aa)) enclose the DRBM domain.

This sequence belongs to the ribonuclease III family. As to quaternary structure, homodimer. The cofactor is Mg(2+).

It localises to the cytoplasm. It catalyses the reaction Endonucleolytic cleavage to 5'-phosphomonoester.. Digests double-stranded RNA. Involved in the processing of primary rRNA transcript to yield the immediate precursors to the large and small rRNAs (23S and 16S). Processes some mRNAs, and tRNAs when they are encoded in the rRNA operon. Processes pre-crRNA and tracrRNA of type II CRISPR loci if present in the organism. This is Ribonuclease 3 from Acinetobacter baumannii (strain SDF).